Here is a 437-residue protein sequence, read N- to C-terminus: tRNA-2-methylthio-N(6)-dimethylallyladenosine synthase (437 aa).

Residues 1–117 (MKFYIKTFGC…LPNLLEEAKS (117 aa)) form the MTTase N-terminal domain. 6 residues coordinate [4Fe-4S] cluster: Cys10, Cys46, Cys80, Cys156, Cys160, and Cys163. One can recognise a Radical SAM core domain in the interval 142-371 (RENKYTAFVT…INLQKDITFK (230 aa)). The 62-residue stretch at 374–435 (LEYQDKIVEI…RFSLEGSIIG (62 aa)) folds into the TRAM domain.

It belongs to the methylthiotransferase family. MiaB subfamily. In terms of assembly, monomer. Requires [4Fe-4S] cluster as cofactor.

It is found in the cytoplasm. It carries out the reaction N(6)-dimethylallyladenosine(37) in tRNA + (sulfur carrier)-SH + AH2 + 2 S-adenosyl-L-methionine = 2-methylsulfanyl-N(6)-dimethylallyladenosine(37) in tRNA + (sulfur carrier)-H + 5'-deoxyadenosine + L-methionine + A + S-adenosyl-L-homocysteine + 2 H(+). Catalyzes the methylthiolation of N6-(dimethylallyl)adenosine (i(6)A), leading to the formation of 2-methylthio-N6-(dimethylallyl)adenosine (ms(2)i(6)A) at position 37 in tRNAs that read codons beginning with uridine. The protein is tRNA-2-methylthio-N(6)-dimethylallyladenosine synthase of Sulfurihydrogenibium sp. (strain YO3AOP1).